We begin with the raw amino-acid sequence, 37 residues long: Cytochrome b6-f complex subunit 5 (37 aa).

Residues 5–25 traverse the membrane as a helical segment; the sequence is FLFGIVLGLIPITLAGLFVTA.

The protein belongs to the PetG family. The 4 large subunits of the cytochrome b6-f complex are cytochrome b6, subunit IV (17 kDa polypeptide, PetD), cytochrome f and the Rieske protein, while the 4 small subunits are PetG, PetL, PetM and PetN. The complex functions as a dimer.

The protein resides in the plastid. Its subcellular location is the chloroplast thylakoid membrane. Component of the cytochrome b6-f complex, which mediates electron transfer between photosystem II (PSII) and photosystem I (PSI), cyclic electron flow around PSI, and state transitions. PetG is required for either the stability or assembly of the cytochrome b6-f complex. This is Cytochrome b6-f complex subunit 5 from Platanus occidentalis (Sycamore).